Consider the following 277-residue polypeptide: Shikimate dehydrogenase (NADP(+)) (277 aa).

Shikimate-binding positions include 19–21 (SKS) and Thr66. Lys70 functions as the Proton acceptor in the catalytic mechanism. Residue Asp82 coordinates NADP(+). The shikimate site is built by Asn91 and Asp107. Residues 133–137 (GAGGA), 157–162 (NRTRAR), and Leu222 each bind NADP(+). Tyr224 contributes to the shikimate binding site. Residue Gly245 coordinates NADP(+).

This sequence belongs to the shikimate dehydrogenase family. In terms of assembly, homodimer.

The enzyme catalyses shikimate + NADP(+) = 3-dehydroshikimate + NADPH + H(+). The protein operates within metabolic intermediate biosynthesis; chorismate biosynthesis; chorismate from D-erythrose 4-phosphate and phosphoenolpyruvate: step 4/7. Functionally, involved in the biosynthesis of the chorismate, which leads to the biosynthesis of aromatic amino acids. Catalyzes the reversible NADPH linked reduction of 3-dehydroshikimate (DHSA) to yield shikimate (SA). This is Shikimate dehydrogenase (NADP(+)) from Roseobacter denitrificans (strain ATCC 33942 / OCh 114) (Erythrobacter sp. (strain OCh 114)).